A 316-amino-acid polypeptide reads, in one-letter code: Methionyl-tRNA formyltransferase (316 aa).

Position 112 to 115 (112 to 115) interacts with (6S)-5,6,7,8-tetrahydrofolate; the sequence is SLLP.

The protein belongs to the Fmt family.

The catalysed reaction is L-methionyl-tRNA(fMet) + (6R)-10-formyltetrahydrofolate = N-formyl-L-methionyl-tRNA(fMet) + (6S)-5,6,7,8-tetrahydrofolate + H(+). Functionally, attaches a formyl group to the free amino group of methionyl-tRNA(fMet). The formyl group appears to play a dual role in the initiator identity of N-formylmethionyl-tRNA by promoting its recognition by IF2 and preventing the misappropriation of this tRNA by the elongation apparatus. In Psychromonas ingrahamii (strain DSM 17664 / CCUG 51855 / 37), this protein is Methionyl-tRNA formyltransferase.